The sequence spans 144 residues: Ninjurin-2 (144 aa).

At 1–62 the chain is on the extracellular side; that stretch reads MESDREIIHL…KSVLEQGPFS (62 aa). The interval 27-39 is helix alpha1; sequence NHYATKKSVAESM. The helix alpha2 stretch occupies residues 40–59; sequence LDVALFMSNAMRLKSVLEQG. A helical membrane pass occupies residues 63 to 94; the sequence is QYYTTLLTLISASLLLQVVIGILLVVIARLNL. The Cytoplasmic portion of the chain corresponds to 95 to 98; sequence NEVE. A helical transmembrane segment spans residues 99–128; it reads NQWRLNQLNNAATTLVFITVVINIFITAFG. Residue Gln-105 participates in cholesterol binding. At 129 to 144 the chain is on the extracellular side; that stretch reads AHKTGSVAARTSSNPI.

This sequence belongs to the ninjurin family. As to quaternary structure, homooligomer; in response to stimuli, homooligomerizes into filaments. In contrast to NINJ1, the filament is curved toward the intracellular space, preventing its circularization on a relatively flat membrane to mediate plasma membrane rupture: curvature is caused by cholesterol-binding at the cytoplasmic leaflet.

It localises to the cell membrane. Its role in unclear. In contrast to NINJ1 paralog, does not mediate plasma membrane rupture (cytolysis) downstream of necroptotic and pyroptotic programmed cell death. While it is able to oligomerize and form filaments, filaments are curved toward the intracellular space, preventing circularization to mediate plasma membrane rupture. May act as a homophilic transmembrane adhesion molecule involved in nerve regeneration. Promotes axonal growth. The chain is Ninjurin-2 (Ninj2) from Rattus norvegicus (Rat).